Reading from the N-terminus, the 997-residue chain is MKPITSSSKRRWNRFRREMCNYSKRLDTFQKKKWPRAKPTPETLATVGFYYNPISESNSEERLDNVTCYMCTKSFYDWEDDDDPLKEHITHSPSCPWAYILSSKNNPNQNPQAAALTKCREQTFVDKVWPYTNRPDYHCEPSVMAASGFVYNPTADAKDAAHCLYCDINLHDWEPDDDPYTEHKRRRADCVFFTWKDPNSLSPTKLSFLSTSNIDPEDLTEDNSILPVSPTRDSTKSHKTLNFSPSRKNNLNARPLTMSLYTNTSEEKDSQPTRAPQSPTKPVLLTAPRRKNKSPKKSKPAVFKPVKPIFSDEDEDDDDLTASQPFSKGICNDSMQVAKKNFTEEIPLKEDEKDNELEHLVSPATSVHTTVSDITGHQSVTDESDEQNNCMSTPPKIEIESKIEEEISVVSKSKEISSSVSSVGKEQNHTEKQVAIETPEQQKVEKEDEHLNLQGSFIEESTKQPISSKPSTSSPDMTDAATGGRVSSSSFRDKILQTNFSPRSTIDSFSNISKKRNSEEANDENDETNLKIPIPEKKRKFQEVLQSKNILVSSTEDSHEPVKVTEDSQTAIHVSKFEDLENKSMESEQSLQLLSESENDDKPLIDLIPLLAIKRKDNLVSGVLEKGKSTSTSKTKFDTSIVDFIEKPKTEISEVLPEEKRKAICDESQTVRVSIDRGVTKTRDVSSPVSDEKSENVNHEEANSGHTVMNVHSSLDPQPIVQPNELESGSYLKDLPDRNVGNSEKVTFQEDDINSPKLQSKNNQTVEAVNTETSDKLQEKEANHELENIEKIEEKLTEVDKVSLSDAFPDQEIKNSRTSVQNGTRSVSKNTPEKETKVDKIDNVSKKDVETSPGSCETSSAFAKTYAEKEVTSINLPSVRKPLDESYYDHSISPFDPLCQSSFLAPQTPVKSKHALPLVEANAPPWEPIDFSSLLESPVPNPVEPNKLSEKELDMTVEQWIKFMYAKCAKEFEEACEEKIEWLLEEGKRAEEYIQNL.

BIR repeat units follow at residues 25 to 99 (RLDT…PWAY) and 120 to 194 (REQT…VFFT). Residues Cys-163, Cys-166, His-183, and Cys-190 each contribute to the Zn(2+) site. Disordered regions lie at residues 217-329 (EDLT…FSKG), 370-527 (TVSD…ENDE), 682-701 (TRDVSSPVSDEKSENVNHEE), 755-782 (SPKLQSKNNQTVEAVNTETSDKLQEKEA), and 817-838 (RTSVQNGTRSVSKNTPEKETKV). Positions 240 to 252 (TLNFSPSRKNNLN) are enriched in polar residues. Over residues 288–299 (PRRKNKSPKKSK) the composition is skewed to basic residues. Over residues 311-320 (SDEDEDDDDL) the composition is skewed to acidic residues. Positions 370-392 (TVSDITGHQSVTDESDEQNNCMS) are enriched in polar residues. Residues 408–423 (SVVSKSKEISSSVSSV) show a composition bias toward low complexity. Over residues 426 to 451 (EQNHTEKQVAIETPEQQKVEKEDEHL) the composition is skewed to basic and acidic residues. 2 stretches are compositionally biased toward polar residues: residues 463 to 476 (KQPISSKPSTSSPD) and 485 to 512 (RVSSSSFRDKILQTNFSPRSTIDSFSNI). The segment covering 756-772 (PKLQSKNNQTVEAVNTE) has biased composition (polar residues). Over residues 773-782 (TSDKLQEKEA) the composition is skewed to basic and acidic residues. The segment covering 817–830 (RTSVQNGTRSVSKN) has biased composition (polar residues).

As to quaternary structure, component of the CPC complex at least composed of ark1, bir1 and pic1. Interacts with the mitotic checkpoint complex (MCC) subunit mad3. Post-translationally, phosphorylated by ark1.

The protein localises to the nucleus. The protein resides in the cytoplasm. Its subcellular location is the cytoskeleton. It localises to the spindle. It is found in the chromosome. The protein localises to the centromere. Its function is as follows. Component of the chromosomal passenger complex (CPC), a complex that acts as a key regulator of chromosome segregation and cytokinesis. Has a role in chromosome segregation by recruiting condensin and ark1 kinase to appropriate sites as the cell progresses through mitosis. Ark1 activity depends upon bir1 function and phosphorylation. Ark1 with bir1 function is required for full-scale association with kinetochores and formation of a complex with mad3. The polypeptide is Chromosomal passenger complex protein bir1 (bir1) (Schizosaccharomyces pombe (strain 972 / ATCC 24843) (Fission yeast)).